The following is a 198-amino-acid chain: Holliday junction branch migration complex subunit RuvA (198 aa).

The tract at residues 1-61 is domain I; it reads MYEYFEGIIQ…DNDQTLYGFE (61 aa). Positions 62–140 are domain II; that stretch reads GAADKRTFNQ…TDGQPAAAAI (79 aa). A flexible linker region spans residues 141-145; sequence APVAS. The domain III stretch occupies residues 146–198; that stretch reads DVDSELADALAALVALGYPQRTVDGLTDTLKAFSAKTTDAYLREGLRLLSGKA.

The protein belongs to the RuvA family. As to quaternary structure, homotetramer. Forms an RuvA(8)-RuvB(12)-Holliday junction (HJ) complex. HJ DNA is sandwiched between 2 RuvA tetramers; dsDNA enters through RuvA and exits via RuvB. An RuvB hexamer assembles on each DNA strand where it exits the tetramer. Each RuvB hexamer is contacted by two RuvA subunits (via domain III) on 2 adjacent RuvB subunits; this complex drives branch migration. In the full resolvosome a probable DNA-RuvA(4)-RuvB(12)-RuvC(2) complex forms which resolves the HJ.

It localises to the cytoplasm. Functionally, the RuvA-RuvB-RuvC complex processes Holliday junction (HJ) DNA during genetic recombination and DNA repair, while the RuvA-RuvB complex plays an important role in the rescue of blocked DNA replication forks via replication fork reversal (RFR). RuvA specifically binds to HJ cruciform DNA, conferring on it an open structure. The RuvB hexamer acts as an ATP-dependent pump, pulling dsDNA into and through the RuvAB complex. HJ branch migration allows RuvC to scan DNA until it finds its consensus sequence, where it cleaves and resolves the cruciform DNA. The polypeptide is Holliday junction branch migration complex subunit RuvA (Lacticaseibacillus casei (strain BL23) (Lactobacillus casei)).